Here is a 61-residue protein sequence, read N- to C-terminus: MIHAHSNARLLRWAILAIAPATLGACAPNGPPGLPYPDGKPLIPINTAAPEQGSSCQTRAP.

Positions 1-25 (MIHAHSNARLLRWAILAIAPATLGA) are cleaved as a signal peptide. A disordered region spans residues 29-61 (NGPPGLPYPDGKPLIPINTAAPEQGSSCQTRAP). Positions 52 to 61 (QGSSCQTRAP) are enriched in polar residues.

The polypeptide is Type IV secretion system protein PtlI homolog (ptlI) (Bordetella bronchiseptica (strain ATCC BAA-588 / NCTC 13252 / RB50) (Alcaligenes bronchisepticus)).